The following is a 263-amino-acid chain: L-histidine 2-aminobutanoyltransferase (263 aa).

This sequence belongs to the methyltransferase superfamily. CntL family. Interacts with CntM.

The catalysed reaction is L-histidine + S-adenosyl-L-methionine = (2S)-2-amino-4-{[(1S)-1-carboxy-2-(1H-imidazol-4-yl)ethyl]amino}butanoate + S-methyl-5'-thioadenosine + H(+). Its function is as follows. Catalyzes the nucleophilic attack of one alpha-aminobutanoate moiety from SAM onto L-histidine to produce the intermediate (2S)-2-amino-4-{[(1S)-1-carboxy-2-(1H-imidazol-4-yl)ethyl]amino}butanoate. Functions in the biosynthesis of the metallophore pseudopaline, which is involved in the acquisition of nickel and zinc, and thus enables bacterial growth inside the host, where metal access is limited. Therefore, this enzyme probably contributes to Pseudomonas virulence. Cannot use D-histidine in place of L-histidine as substrate. The polypeptide is L-histidine 2-aminobutanoyltransferase (Pseudomonas aeruginosa (strain UCBPP-PA14)).